A 223-amino-acid polypeptide reads, in one-letter code: Deoxyribose-phosphate aldolase (223 aa).

Aspartate 91 functions as the Proton donor/acceptor in the catalytic mechanism. The active-site Schiff-base intermediate with acetaldehyde is the lysine 153. Residue lysine 182 is the Proton donor/acceptor of the active site.

It belongs to the DeoC/FbaB aldolase family. DeoC type 1 subfamily.

The protein resides in the cytoplasm. The enzyme catalyses 2-deoxy-D-ribose 5-phosphate = D-glyceraldehyde 3-phosphate + acetaldehyde. The protein operates within carbohydrate degradation; 2-deoxy-D-ribose 1-phosphate degradation; D-glyceraldehyde 3-phosphate and acetaldehyde from 2-deoxy-alpha-D-ribose 1-phosphate: step 2/2. Its function is as follows. Catalyzes a reversible aldol reaction between acetaldehyde and D-glyceraldehyde 3-phosphate to generate 2-deoxy-D-ribose 5-phosphate. The protein is Deoxyribose-phosphate aldolase of Streptococcus pyogenes serotype M2 (strain MGAS10270).